We begin with the raw amino-acid sequence, 110 residues long: MASIIYSPKDIFEQDFKVSMRGYDKKEVDVFLDDVIKDYENYLEQIEKLQMENRRLQQALDKKESEASNVRNSGTAMYNQKPIAQSATNFDILKRISRLEKEVFGRQIRE.

Positions 32–73 (LDDVIKDYENYLEQIEKLQMENRRLQQALDKKESEASNVRNS) form a coiled coil.

It belongs to the GpsB family. Forms polymers through the coiled coil domains. Interacts with PBP1, MreC and EzrA.

It localises to the cytoplasm. Functionally, divisome component that associates with the complex late in its assembly, after the Z-ring is formed, and is dependent on DivIC and PBP2B for its recruitment to the divisome. Together with EzrA, is a key component of the system that regulates PBP1 localization during cell cycle progression. Its main role could be the removal of PBP1 from the cell pole after pole maturation is completed. Also contributes to the recruitment of PBP1 to the division complex. Not essential for septum formation. The polypeptide is Cell cycle protein GpsB (Streptococcus agalactiae serotype Ia (strain ATCC 27591 / A909 / CDC SS700)).